The primary structure comprises 375 residues: Alcohol dehydrogenase 1A (375 aa).

Ser2 carries the post-translational modification N-acetylserine. Phosphoserine is present on Ser23. Residue Cys47 participates in Zn(2+) binding. An NAD(+)-binding site is contributed by 48-52 (GTDDH). The Zn(2+) site is built by His68, Cys98, Cys101, Cys104, Cys112, and Cys175. NAD(+) contacts are provided by residues 200 to 205 (GLGGVG), Asp224, Lys229, Ile270, 293 to 295 (VGV), 318 to 320 (AIL), and Arg370.

This sequence belongs to the zinc-containing alcohol dehydrogenase family. Dimer of identical or heterodimer of closely related subunits alpha, beta, or gamma that are encoded by genes ADH1A, ADH1B, and ADH1C, respectively. The cofactor is Zn(2+).

The protein resides in the cytoplasm. It catalyses the reaction a primary alcohol + NAD(+) = an aldehyde + NADH + H(+). The enzyme catalyses a secondary alcohol + NAD(+) = a ketone + NADH + H(+). It carries out the reaction butan-1-ol + NAD(+) = butanal + NADH + H(+). The catalysed reaction is 1-propanol + NAD(+) = propanal + NADH + H(+). Functionally, alcohol dehydrogenase. Oxidizes primary as well as secondary alcohols. Ethanol is a very poor substrate. This Homo sapiens (Human) protein is Alcohol dehydrogenase 1A (ADH1A).